The primary structure comprises 156 residues: ATP synthase subunit b (156 aa).

The chain crosses the membrane as a helical span at residues leucine 7 to leucine 29.

This sequence belongs to the ATPase B chain family. F-type ATPases have 2 components, F(1) - the catalytic core - and F(0) - the membrane proton channel. F(1) has five subunits: alpha(3), beta(3), gamma(1), delta(1), epsilon(1). F(0) has three main subunits: a(1), b(2) and c(10-14). The alpha and beta chains form an alternating ring which encloses part of the gamma chain. F(1) is attached to F(0) by a central stalk formed by the gamma and epsilon chains, while a peripheral stalk is formed by the delta and b chains.

The protein resides in the cell inner membrane. F(1)F(0) ATP synthase produces ATP from ADP in the presence of a proton or sodium gradient. F-type ATPases consist of two structural domains, F(1) containing the extramembraneous catalytic core and F(0) containing the membrane proton channel, linked together by a central stalk and a peripheral stalk. During catalysis, ATP synthesis in the catalytic domain of F(1) is coupled via a rotary mechanism of the central stalk subunits to proton translocation. Its function is as follows. Component of the F(0) channel, it forms part of the peripheral stalk, linking F(1) to F(0). The polypeptide is ATP synthase subunit b (Burkholderia pseudomallei (strain 668)).